Here is a 246-residue protein sequence, read N- to C-terminus: MLEQVCQLARNAGDAIMQVYDGAKPMEYARKQDDSPVTAADIAAHTVILEGLRTLTPDIPVLSEEDPPAWEVRQHWQRYWLVDPLDGTKEFIKRNGEFTVNIALIEQGKPVLGVVYAPVLKVMYYAAEGKAWKEECGVRKQIQVRDARPPLVVISRSHTDDELTEYLQQLGEHQTTSIGSSLKFCLVAEGQAQLYPRFGPTSVWDTAAGHAIAVAAGAHVHDWQGKTLDYTPRESFLNPGFRVTIY.

Mg(2+)-binding residues include E64, D83, L85, D86, and D205. A substrate-binding site is contributed by E64. Residues 85–88 (LDGT) and D205 contribute to the substrate site.

This sequence belongs to the inositol monophosphatase superfamily. CysQ family. It depends on Mg(2+) as a cofactor.

It localises to the cell inner membrane. It catalyses the reaction adenosine 3',5'-bisphosphate + H2O = AMP + phosphate. Functionally, converts adenosine-3',5'-bisphosphate (PAP) to AMP. The sequence is that of 3'(2'),5'-bisphosphate nucleotidase CysQ from Salmonella typhimurium (strain LT2 / SGSC1412 / ATCC 700720).